Consider the following 481-residue polypeptide: UDP-N-acetylmuramate--L-alanine ligase (481 aa).

Position 115 to 121 (115 to 121) interacts with ATP; that stretch reads GTHGKTT.

The protein belongs to the MurCDEF family.

It is found in the cytoplasm. The enzyme catalyses UDP-N-acetyl-alpha-D-muramate + L-alanine + ATP = UDP-N-acetyl-alpha-D-muramoyl-L-alanine + ADP + phosphate + H(+). It functions in the pathway cell wall biogenesis; peptidoglycan biosynthesis. Functionally, cell wall formation. The polypeptide is UDP-N-acetylmuramate--L-alanine ligase (Granulibacter bethesdensis (strain ATCC BAA-1260 / CGDNIH1)).